The primary structure comprises 126 residues: Glycerol dehydrogenase small subunit (126 aa).

4 consecutive transmembrane segments (helical) span residues 13 to 33, 41 to 61, 67 to 87, and 92 to 112; these read WLTL…VIGG, GSTY…FMLM, AFLY…EVGF, and LLPR…TIPV.

The protein resides in the cell membrane. It catalyses the reaction glycerol + A = dihydroxyacetone + AH2. Its function is as follows. Catalyzes the oxidation of glycerol to glycerone. Also acts, more slowly, on a number of other polyols including D-sorbitol, D-arabinitol, D-mannitol, meso-erythritol, adonitol and propylene glycol. This is Glycerol dehydrogenase small subunit (sldB) from Gluconobacter thailandicus.